The primary structure comprises 156 residues: Ribosomal RNA large subunit methyltransferase H (156 aa).

S-adenosyl-L-methionine is bound by residues leucine 73, glycine 104, and 123-128; that span reads LSDLTL.

The protein belongs to the RNA methyltransferase RlmH family. As to quaternary structure, homodimer.

The protein localises to the cytoplasm. The enzyme catalyses pseudouridine(1915) in 23S rRNA + S-adenosyl-L-methionine = N(3)-methylpseudouridine(1915) in 23S rRNA + S-adenosyl-L-homocysteine + H(+). Specifically methylates the pseudouridine at position 1915 (m3Psi1915) in 23S rRNA. In Methylibium petroleiphilum (strain ATCC BAA-1232 / LMG 22953 / PM1), this protein is Ribosomal RNA large subunit methyltransferase H.